A 197-amino-acid polypeptide reads, in one-letter code: Potassium-transporting ATPase KdpC subunit (197 aa).

The chain crosses the membrane as a helical span at residues Pro7–Val27.

The protein belongs to the KdpC family. In terms of assembly, the system is composed of three essential subunits: KdpA, KdpB and KdpC.

It localises to the cell inner membrane. In terms of biological role, part of the high-affinity ATP-driven potassium transport (or Kdp) system, which catalyzes the hydrolysis of ATP coupled with the electrogenic transport of potassium into the cytoplasm. This subunit acts as a catalytic chaperone that increases the ATP-binding affinity of the ATP-hydrolyzing subunit KdpB by the formation of a transient KdpB/KdpC/ATP ternary complex. This chain is Potassium-transporting ATPase KdpC subunit, found in Beijerinckia indica subsp. indica (strain ATCC 9039 / DSM 1715 / NCIMB 8712).